The sequence spans 410 residues: Platelet-activating factor acetylhydrolase IB subunit alpha (410 aa).

The required for self-association and interaction with PAFAH1B2 and PAFAH1B3 stretch occupies residues Met-1 to Asp-38. Residues Met-1–Met-66 are interaction with NDE1. Residues Met-1–Tyr-102 are interaction with NDEL1. A LisH domain is found at Gln-7 to Met-39. Residue Lys-53 is modified to N6-acetyllysine. Residues Thr-56–Gly-82 adopt a coiled-coil conformation. The interaction with dynein and dynactin stretch occupies residues Gly-83–Arg-410. WD repeat units lie at residues Gly-106–Lys-147, Gly-148–Thr-187, Gly-190–Thr-229, Gly-232–Glu-271, Glu-274–Thr-333, Gly-336–Asn-377, and His-379–Arg-410. The residue at position 109 (Ser-109) is a Phosphoserine. Residues Tyr-367–Cys-409 form an interaction with DCX region. The interval Phe-388 to Arg-410 is interaction with NDEL1.

It belongs to the WD repeat LIS1/nudF family. As to quaternary structure, can self-associate. Component of the cytosolic PAF-AH (I) heterotetrameric enzyme, which is composed of PAFAH1B1 (beta), PAFAH1B2 (alpha2) and PAFAH1B3 (alpha1) subunits. The catalytic activity of the enzyme resides in the alpha1 (PAFAH1B3) and alpha2 (PAFAH1B2) subunits, whereas the beta subunit (PAFAH1B1) has regulatory activity. Trimer formation is not essential for the catalytic activity. Interacts with the catalytic dimer of PAF-AH (I) heterotetrameric enzyme: interacts with PAFAH1B2 homodimer (alpha2/alpha2 homodimer), PAFAH1B3 homodimer (alpha1/alpha1 homodimer) and PAFAH1B2-PAFAH1B3 heterodimer (alpha2/alpha1 heterodimer). Interacts with DCX, dynein, dynactin, IQGAP1, KATNB1, NDE1, NDEL1, NUDC and RSN. Interacts with DISC1, and this interaction is enhanced by NDEL1. Interacts with DAB1 when DAB1 is phosphorylated in response to RELN/reelin signaling. Interacts with INTS13. Interacts with DCDC1.

The protein resides in the cytoplasm. It localises to the cytoskeleton. Its subcellular location is the microtubule organizing center. It is found in the centrosome. The protein localises to the spindle. The protein resides in the nucleus membrane. Its function is as follows. Regulatory subunit (beta subunit) of the cytosolic type I platelet-activating factor (PAF) acetylhydrolase (PAF-AH (I)), an enzyme that catalyzes the hydrolyze of the acetyl group at the sn-2 position of PAF and its analogs and participates in PAF inactivation. Regulates the PAF-AH (I) activity in a catalytic dimer composition-dependent manner. Positively regulates the activity of the minus-end directed microtubule motor protein dynein. May enhance dynein-mediated microtubule sliding by targeting dynein to the microtubule plus end. Required for several dynein- and microtubule-dependent processes such as the maintenance of Golgi integrity, the peripheral transport of microtubule fragments and the coupling of the nucleus and centrosome. Required during brain development for the proliferation of neuronal precursors and the migration of newly formed neurons from the ventricular/subventricular zone toward the cortical plate. Neuronal migration involves a process called nucleokinesis, whereby migrating cells extend an anterior process into which the nucleus subsequently translocates. During nucleokinesis dynein at the nuclear surface may translocate the nucleus towards the centrosome by exerting force on centrosomal microtubules. Also required for proper activation of Rho GTPases and actin polymerization at the leading edge of locomoting cerebellar neurons and postmigratory hippocampal neurons in response to calcium influx triggered via NMDA receptors. May also play a role in other forms of cell locomotion including the migration of fibroblasts during wound healing. Required for dynein recruitment to microtubule plus ends and BICD2-bound cargos. May modulate the Reelin pathway through interaction of the PAF-AH (I) catalytic dimer with VLDLR. This chain is Platelet-activating factor acetylhydrolase IB subunit alpha, found in Pan troglodytes (Chimpanzee).